Consider the following 241-residue polypeptide: CD99 antigen-like protein 2 (241 aa).

The signal sequence occupies residues 1–23 (MAKWGSPFVFALACLALSWRVYG). Residues 24 to 173 (DDFDLYDALG…TGFGSQAETG (150 aa)) are Extracellular-facing. Positions 30-168 (DALGDPTEKP…NDGSDTGFGS (139 aa)) are disordered. A compositionally biased stretch (gly residues) spans 143 to 154 (GGGGGGGGGRAT). Residues 174 to 196 (TIAGIASALAMALIGAVSSYISY) form a helical membrane-spanning segment. The Cytoplasmic portion of the chain corresponds to 197-241 (QQKKFCFSIQEGLNAEYVKGEHMEAVVSEEPQVKYSVVESQSAIP).

The protein belongs to the CD99 family.

It is found in the cell membrane. The protein localises to the cell junction. May function as a homophilic adhesion molecule. This Xenopus tropicalis (Western clawed frog) protein is CD99 antigen-like protein 2 (cd99l2).